A 501-amino-acid polypeptide reads, in one-letter code: Serine/threonine protein phosphatase 2A 55 kDa regulatory subunit B beta isoform (501 aa).

Met-1 carries the post-translational modification N-acetylmethionine. 5 WD repeats span residues 34 to 73 (QEVD…DHGG), 110 to 151 (EIEE…IKKI), 220 to 258 (AHDY…QSFN), 269 to 309 (DLTE…LCDS), and 328 to 366 (EIIA…GPVA). Residues 439–449 (TPARPSRSIGS) show a composition bias toward polar residues. The interval 439–466 (TPARPSRSIGSMTRVVRRGSESPGTEAN) is disordered. Residues 471–501 (DFTTKLLHMAWHPTENSIACAAANSLYMYYA) form a WD 6 repeat.

This sequence belongs to the phosphatase 2A regulatory subunit B family. As to quaternary structure, PP2A consists of a common heteromeric enzyme, composed of a catalytic subunit (subunits C), a constant regulatory subunit (subunit A), and a variety of regulatory subunits such as subunits B (the R2/B/PR55/B55, R3/B''/PR72/PR130/PR59 and R5/B'/B56 families). Interacts with SIC/RON3. In terms of tissue distribution, expressed ubiquitously.

The B regulatory subunit may modulate substrate selectivity and catalytic activity, and may also direct the localization of the catalytic enzyme to a particular subcellular compartment. In Arabidopsis thaliana (Mouse-ear cress), this protein is Serine/threonine protein phosphatase 2A 55 kDa regulatory subunit B beta isoform (PP2AB2).